The sequence spans 113 residues: UPF0251 protein TK0562 (113 aa).

Belongs to the UPF0251 family.

The polypeptide is UPF0251 protein TK0562 (Thermococcus kodakarensis (strain ATCC BAA-918 / JCM 12380 / KOD1) (Pyrococcus kodakaraensis (strain KOD1))).